A 185-amino-acid chain; its full sequence is Threonylcarbamoyl-AMP synthase (185 aa).

A YrdC-like domain is found at 4–185 (SWRVQQAARE…LATGNIVRPA (182 aa)).

Belongs to the SUA5 family. TsaC subfamily.

The protein localises to the cytoplasm. The catalysed reaction is L-threonine + hydrogencarbonate + ATP = L-threonylcarbamoyladenylate + diphosphate + H2O. Its function is as follows. Required for the formation of a threonylcarbamoyl group on adenosine at position 37 (t(6)A37) in tRNAs that read codons beginning with adenine. Catalyzes the conversion of L-threonine, HCO(3)(-)/CO(2) and ATP to give threonylcarbamoyl-AMP (TC-AMP) as the acyladenylate intermediate, with the release of diphosphate. The polypeptide is Threonylcarbamoyl-AMP synthase (Pseudomonas fluorescens (strain Pf0-1)).